Here is a 622-residue protein sequence, read N- to C-terminus: Low affinity potassium transport system protein Kup (622 aa).

The next 12 membrane-spanning stretches (helical) occupy residues 9 to 29 (LPAITLAAIGVVYGDIGTSPL), 49 to 69 (VFGFLSLIFWLLIFVVSIKYL), 103 to 123 (VIMGLIGGSFFYGEVVITPAI), 137 to 157 (PQLDTWIVPLSIIVLTLLFMI), 165 to 185 (VGKLFAPIMLTWFLILAGLGL), 213 to 233 (VSFIALGAVVLSITGVEALYA), 247 to 267 (WFTVVLPSLTLNYFGQGALLL), 276 to 296 (PFFLLAPDWALIPLLIIAALA), 337 to 357 (IYIPFVNWMLYVAVVIVIVSF), 363 to 383 (LAAAYGIAVTGTMVLTSILST), 396 to 416 (FVALILIAFLCVDIPLFTANL), and 419 to 439 (LLSGGWLPLSLGTVMFIVMTT).

This sequence belongs to the HAK/KUP transporter (TC 2.A.72) family.

The protein localises to the cell inner membrane. It catalyses the reaction K(+)(in) + H(+)(in) = K(+)(out) + H(+)(out). Functionally, responsible for the low-affinity transport of potassium into the cell. Likely operates as a K(+):H(+) symporter. The sequence is that of Low affinity potassium transport system protein Kup from Shigella boydii serotype 18 (strain CDC 3083-94 / BS512).